A 68-amino-acid chain; its full sequence is UPF0434 protein BURPS668_0926 (68 aa).

The protein belongs to the UPF0434 family.

The polypeptide is UPF0434 protein BURPS668_0926 (Burkholderia pseudomallei (strain 668)).